An 82-amino-acid polypeptide reads, in one-letter code: Myosin light chain alkali (82 aa).

The region spanning 7–42 (GCYGDFIECLKLYDKEENGTMMLAELQHALLALGES) is the EF-hand domain.

As to quaternary structure, myosin is a hexamer of 2 heavy chains and 4 light chains.

This chain is Myosin light chain alkali (Mlc1), found in Drosophila sechellia (Fruit fly).